A 258-amino-acid polypeptide reads, in one-letter code: HVA22-like protein j (258 aa).

A disordered region spans residues Ala153 to Ala258. The segment covering Gln156–Ser169 has biased composition (polar residues). Residues Trp206–Pro215 show a composition bias toward pro residues.

This sequence belongs to the DP1 family.

The chain is HVA22-like protein j (HVA22J) from Arabidopsis thaliana (Mouse-ear cress).